A 579-amino-acid chain; its full sequence is V-type ATP synthase alpha chain (579 aa).

227-234 provides a ligand contact to ATP; sequence GGFGTGKT.

The protein belongs to the ATPase alpha/beta chains family.

It carries out the reaction ATP + H2O + 4 H(+)(in) = ADP + phosphate + 5 H(+)(out). Functionally, produces ATP from ADP in the presence of a proton gradient across the membrane. The V-type alpha chain is a catalytic subunit. In Anaeromyxobacter dehalogenans (strain 2CP-1 / ATCC BAA-258), this protein is V-type ATP synthase alpha chain.